Here is a 316-residue protein sequence, read N- to C-terminus: Transcription initiation factor IIB (316 aa).

The segment at 11–42 adopts a TFIIB-type zinc-finger fold; the sequence is PKVTCPNHPDALLVEDYRAGDMICSECGLVVG. Zn(2+) is bound by residues Cys15, His18, Cys34, and Cys37. 2 tandem repeats follow at residues 124-200 and 218-294.

It belongs to the TFIIB family.

The protein localises to the nucleus. It localises to the chromosome. The catalysed reaction is L-lysyl-[protein] + acetyl-CoA = N(6)-acetyl-L-lysyl-[protein] + CoA + H(+). Its function is as follows. General transcription factor that plays a role in transcription initiation by RNA polymerase II (Pol II). Involved in the pre-initiation complex (PIC) formation and Pol II recruitment at promoter DNA. Together with the TATA box-bound TBP forms the core initiation complex and provides a bridge between TBP and the Pol II-TFIIF complex. Released from the PIC early following the onset of transcription during the initiation and elongation transition and reassociates with TBP during the next transcription cycle. Associates with chromatin to core promoter-specific regions. Binds to two distinct DNA core promoter consensus sequence elements in a TBP-independent manner; these IIB-recognition elements (BREs) are localized immediately upstream (BREu), 5'-[GC][GC][GA]CGCC-3', and downstream (BREd), 5'-[GA]T[TGA][TG][GT][TG][TG]-3', of the TATA box element. Modulates transcription start site selection. Also exhibits autoacetyltransferase activity that contributes to the activated transcription. This Xenopus laevis (African clawed frog) protein is Transcription initiation factor IIB.